The chain runs to 460 residues: tRNA modification GTPase MnmE (460 aa).

Positions 22, 87, and 126 each coordinate (6S)-5-formyl-5,6,7,8-tetrahydrofolate. The region spanning 222–381 (GLKTAIIGKP…LENTIYNLVF (160 aa)) is the TrmE-type G domain. Position 232 (N232) interacts with K(+). GTP-binding positions include 232 to 237 (NVGKSS), 251 to 257 (TDIPGTT), and 276 to 279 (DTAG). S236 contributes to the Mg(2+) binding site. The K(+) site is built by T251, I253, and T256. Mg(2+) is bound at residue T257. K460 contacts (6S)-5-formyl-5,6,7,8-tetrahydrofolate.

It belongs to the TRAFAC class TrmE-Era-EngA-EngB-Septin-like GTPase superfamily. TrmE GTPase family. In terms of assembly, homodimer. Heterotetramer of two MnmE and two MnmG subunits. It depends on K(+) as a cofactor.

Its subcellular location is the cytoplasm. Its function is as follows. Exhibits a very high intrinsic GTPase hydrolysis rate. Involved in the addition of a carboxymethylaminomethyl (cmnm) group at the wobble position (U34) of certain tRNAs, forming tRNA-cmnm(5)s(2)U34. The sequence is that of tRNA modification GTPase MnmE from Thermoanaerobacter pseudethanolicus (strain ATCC 33223 / 39E) (Clostridium thermohydrosulfuricum).